The sequence spans 183 residues: Large ribosomal subunit protein bL32m (183 aa).

The transit peptide at 1 to 71 (MNSLIFGKQL…DFFSNNGILL (71 aa)) directs the protein to the mitochondrion. The Zn(2+) site is built by cysteine 104, cysteine 107, cysteine 117, and cysteine 120.

It belongs to the bacterial ribosomal protein bL32 family. In terms of assembly, component of the mitochondrial large ribosomal subunit (mt-LSU). Mature yeast 74S mitochondrial ribosomes consist of a small (37S) and a large (54S) subunit. The 37S small subunit contains a 15S ribosomal RNA (15S mt-rRNA) and 34 different proteins. The 54S large subunit contains a 21S rRNA (21S mt-rRNA) and 46 different proteins. bL32m has a zinc binding site. In terms of processing, MRPL32 precursor is processed by the m-AAA protease (composed of YTA12/RCA1 and YTA10/AFG3), which cleaves the N-terminal transit peptide. Cleavage by the m-AAA protease takes place prior to assembly into the large subunit, an essential step for mitochondrial ribosome (mitoribosome) assembly. Proper processing by the m-AAA protease is dependent on the zinc-binding region within the tightly folded C-terminal domain of MRPL32: zinc-dependent folding halts degradation initiated from the N-terminus and triggers the release of mature MRPL32.

Its subcellular location is the mitochondrion. Functionally, component of the mitochondrial ribosome (mitoribosome), a dedicated translation machinery responsible for the synthesis of mitochondrial genome-encoded proteins, including at least some of the essential transmembrane subunits of the mitochondrial respiratory chain. The mitoribosomes are attached to the mitochondrial inner membrane and translation products are cotranslationally integrated into the membrane. The chain is Large ribosomal subunit protein bL32m from Saccharomyces cerevisiae (strain ATCC 204508 / S288c) (Baker's yeast).